We begin with the raw amino-acid sequence, 128 residues long: Large ribosomal subunit protein bL17 (128 aa).

It belongs to the bacterial ribosomal protein bL17 family. Part of the 50S ribosomal subunit. Contacts protein L32.

The polypeptide is Large ribosomal subunit protein bL17 (Klebsiella pneumoniae (strain 342)).